We begin with the raw amino-acid sequence, 280 residues long: Adenosylcobinamide-GDP ribazoletransferase (280 aa).

The next 6 helical transmembrane spans lie at 44-64 (GVGV…LFVL), 69-89 (STPL…TGAF), 111-131 (LVIM…MLAL), 135-155 (VALL…ALFV), 189-209 (ISVA…ALVI), and 226-246 (ALLQ…AVMA).

The protein belongs to the CobS family. Mg(2+) is required as a cofactor.

Its subcellular location is the cell inner membrane. It carries out the reaction alpha-ribazole + adenosylcob(III)inamide-GDP = adenosylcob(III)alamin + GMP + H(+). The enzyme catalyses alpha-ribazole 5'-phosphate + adenosylcob(III)inamide-GDP = adenosylcob(III)alamin 5'-phosphate + GMP + H(+). It functions in the pathway cofactor biosynthesis; adenosylcobalamin biosynthesis; adenosylcobalamin from cob(II)yrinate a,c-diamide: step 7/7. Joins adenosylcobinamide-GDP and alpha-ribazole to generate adenosylcobalamin (Ado-cobalamin). Also synthesizes adenosylcobalamin 5'-phosphate from adenosylcobinamide-GDP and alpha-ribazole 5'-phosphate. In Albidiferax ferrireducens (strain ATCC BAA-621 / DSM 15236 / T118) (Rhodoferax ferrireducens), this protein is Adenosylcobinamide-GDP ribazoletransferase.